Reading from the N-terminus, the 285-residue chain is Sulfotransferase 2A1 (285 aa).

K44, S45, G46, T47, N48, and W49 together coordinate 3'-phosphoadenylyl sulfate. H99 serves as the catalytic Proton acceptor. 3'-phosphoadenylyl sulfate-binding residues include R121, S129, Y184, S218, M223, R247, K248, and G249. S251 bears the Phosphoserine mark.

This sequence belongs to the sulfotransferase 1 family. Homodimer. In terms of tissue distribution, predominanly expressed in liver. Detected also in adrenal gland and in jejunum.

The protein localises to the cytoplasm. It is found in the cytosol. The enzyme catalyses an alcohol + 3'-phosphoadenylyl sulfate = an alkyl sulfate + adenosine 3',5'-bisphosphate + H(+). It carries out the reaction 3beta-hydroxyandrost-5-en-17-one + 3'-phosphoadenylyl sulfate = dehydroepiandrosterone 3-sulfate + adenosine 3',5'-bisphosphate + H(+). It catalyses the reaction taurolithocholate + 3'-phosphoadenylyl sulfate = taurolithocholate 3-sulfate + adenosine 3',5'-bisphosphate + H(+). The catalysed reaction is lithocholate + 3'-phosphoadenylyl sulfate = lithocholate sulfate + adenosine 3',5'-bisphosphate + H(+). The enzyme catalyses (24S)-hydroxycholesterol + 3'-phosphoadenylyl sulfate = (24S)-hydroxycholesterol 24-sulfate + adenosine 3',5'-bisphosphate + H(+). It carries out the reaction (24S)-hydroxycholesterol + 3'-phosphoadenylyl sulfate = (24S)-hydroxycholesterol 3-sulfate + adenosine 3',5'-bisphosphate + H(+). It catalyses the reaction (24S)-hydroxycholesterol 24-sulfate + 3'-phosphoadenylyl sulfate = (24S)-hydroxycholesterol 3,24-disulfate + adenosine 3',5'-bisphosphate + H(+). The catalysed reaction is pregnenolone + 3'-phosphoadenylyl sulfate = pregnenolone sulfate + adenosine 3',5'-bisphosphate + H(+). The enzyme catalyses androsterone + 3'-phosphoadenylyl sulfate = androsterone 3alpha-sulfate + adenosine 3',5'-bisphosphate + H(+). Functionally, sulfotransferase that utilizes 3'-phospho-5'-adenylyl sulfate (PAPS) as sulfonate donor to catalyze the sulfonation of steroids and bile acids in the liver and adrenal glands. Mediates the sulfation of a wide range of steroids and sterols, including pregnenolone, androsterone, DHEA, bile acids, cholesterol and as well many xenobiotics that contain alcohol and phenol functional groups. Sulfonation increases the water solubility of most compounds, and therefore their renal excretion, but it can also result in bioactivation to form active metabolites. Plays an important role in maintening steroid and lipid homeostasis. Plays a key role in bile acid metabolism. In addition, catalyzes the metabolic activation of potent carcinogenic polycyclic arylmethanols. The protein is Sulfotransferase 2A1 (SULT2A1) of Macaca fascicularis (Crab-eating macaque).